A 478-amino-acid chain; its full sequence is FERM domain-containing protein B (478 aa).

3 disordered regions span residues 19–39 (ELIP…TITS), 129–196 (EENS…GFLT), and 202–221 (KAQS…TIAS). Composition is skewed to low complexity over residues 22–39 (PTQS…TITS) and 129–164 (EENS…ANDG). An FERM domain is found at 48-468 (VLIRIYFIDD…DWSEEWESKE (421 aa)). Residues 165 to 179 (SGSGSGSGSGSGSGS) show a composition bias toward gly residues. Low complexity-rich tracts occupy residues 180 to 189 (GTSTPNSPKG) and 204 to 216 (QSPQ…SSLS).

In Dictyostelium discoideum (Social amoeba), this protein is FERM domain-containing protein B (frmB).